The following is a 1082-amino-acid chain: RhoGEF domain-containing protein gxcI (1082 aa).

The segment covering 1–15 (MRKNSTSNPSPSHQF) has biased composition (polar residues). 5 disordered regions span residues 1–29 (MRKNSTSNPSPSHQFLTPPKNTTTVVNNN), 59–78 (DKNQQQQQQQQQQTHQVLPQ), 91–394 (YNEQ…VTSL), 438–488 (KQAS…SVSN), and 504–524 (INSFNSDDSNNSNNSNSSLSL). 5 stretches are compositionally biased toward low complexity: residues 20 to 29 (KNTTTVVNNN), 62 to 71 (QQQQQQQQQQ), 96 to 109 (PSSSSSTASSSSSP), 116 to 160 (LLST…SGSP), and 170 to 184 (PTILSPLPSPRRQLP). Positions 185-206 (TRPPSPLPKLPSRPTSPVPPNP) are enriched in pro residues. The segment covering 211–244 (NTTTTNNNNNNNNNNNNNNNNNNNNNNNNNNNNN) has biased composition (low complexity). Residues 262 to 276 (PIPPPNDKPAPPPRP) are compositionally biased toward pro residues. The segment covering 282-366 (TLTTPPTIAT…NNNNNSNNNK (85 aa)) has biased composition (low complexity). Positions 367–379 (PLPPTSTKPPRPK) are enriched in pro residues. Residues 450-473 (SSLSLSTTPTSVSPSTPSSANPTP) are compositionally biased toward low complexity. The DH domain maps to 622-817 (SFNKVIKEII…EKIVNDINGK (196 aa)). The PH-like stretch occupies residues 838–994 (QQLRDQTFLK…NDIDEAINIL (157 aa)). 2 disordered regions span residues 920–961 (NNNN…NSTP) and 1017–1060 (NNNN…NSNN).

In terms of biological role, GTPase-activating protein. The chain is RhoGEF domain-containing protein gxcI (gxcI) from Dictyostelium discoideum (Social amoeba).